A 341-amino-acid chain; its full sequence is HTH-type transcriptional repressor PurR (341 aa).

Residues Ala2–Val56 enclose the HTH lacI-type domain. The segment at residues Ile4–Asn23 is a DNA-binding region (H-T-H motif). The DNA-binding element occupies Ser48–Val56. Residues Tyr73, Arg190, Thr192, Phe221, and Asp275 each coordinate hypoxanthine.

In terms of assembly, homodimer.

It participates in purine metabolism; purine nucleotide biosynthesis [regulation]. In terms of biological role, is the main repressor of the genes involved in the de novo synthesis of purine nucleotides, regulating purB, purC, purEK, purF, purHD, purL, purMN and guaBA expression. PurR is allosterically activated to bind its cognate DNA by binding the purine corepressors, hypoxanthine or guanine, thereby effecting transcription repression. This is HTH-type transcriptional repressor PurR from Shigella sonnei (strain Ss046).